Here is a 367-residue protein sequence, read N- to C-terminus: Glutamate 5-kinase (367 aa).

Position 10 (Lys10) interacts with ATP. Substrate is bound by residues Ser50, Asp137, and Asn149. Residues Thr169–Asp170 and Thr211–Lys217 contribute to the ATP site. The PUA domain maps to Ala275–Glu353.

The protein belongs to the glutamate 5-kinase family.

The protein localises to the cytoplasm. It catalyses the reaction L-glutamate + ATP = L-glutamyl 5-phosphate + ADP. Its pathway is amino-acid biosynthesis; L-proline biosynthesis; L-glutamate 5-semialdehyde from L-glutamate: step 1/2. Functionally, catalyzes the transfer of a phosphate group to glutamate to form L-glutamate 5-phosphate. This chain is Glutamate 5-kinase, found in Cronobacter sakazakii (strain ATCC BAA-894) (Enterobacter sakazakii).